Here is a 162-residue protein sequence, read N- to C-terminus: Allophycocyanin beta chain (162 aa).

Residue asparagine 72 is modified to N4-methylasparagine. Cysteine 82 contacts (2R,3E)-phycocyanobilin.

The protein belongs to the phycobiliprotein family. In terms of assembly, heterodimer of an alpha and a beta chain. In terms of processing, contains one covalently linked phycocyanobilin chromophore.

The protein resides in the cellular thylakoid membrane. Functionally, light-harvesting photosynthetic bile pigment-protein from the phycobiliprotein complex. Allophycocyanin has a maximum absorption at approximately 650 nanometers. The polypeptide is Allophycocyanin beta chain (Microchaete diplosiphon (Fremyella diplosiphon)).